The primary structure comprises 545 residues: E3 ubiquitin-protein ligase ipaH9.8 (545 aa).

Residues 1–242 are interaction with target proteins; the sequence is MLPINNNFSL…YHGPRIYFSM (242 aa). 8 LRR repeats span residues 57–77, 78–99, 100–117, 118–139, 140–157, 158–179, 182–203, and 205–228; these read NSDE…NLPA, QITL…PVTL, KKLY…VLPP, ALES…PDSL, LTMN…SLPQ, ALKN…SEGN, VVRE…ILNL, and NECS…QRLT. Positions 243-250 are linker; sequence SDGQQNTL. The interval 251-545 is E3 ubiquitin-protein ligase catalytic domain; it reads HRPLADAVTA…SENGSQLHHS (295 aa). In terms of domain architecture, NEL spans 253 to 545; sequence PLADAVTAWF…SENGSQLHHS (293 aa). The Glycyl thioester intermediate role is filled by cysteine 337.

The protein belongs to the LRR-containing bacterial E3 ligase family. Also interacts with human and mouse U2AF1 (U2AF35). Ubiquitinated in the presence of host E1 ubiquitin-activating enzyme, E2 ubiquitin-conjugating enzyme and ubiquitin.

It localises to the secreted. The protein localises to the host cytoplasm. It is found in the host nucleus. The catalysed reaction is S-ubiquitinyl-[E2 ubiquitin-conjugating enzyme]-L-cysteine + [acceptor protein]-L-lysine = [E2 ubiquitin-conjugating enzyme]-L-cysteine + N(6)-ubiquitinyl-[acceptor protein]-L-lysine.. Its activity is regulated as follows. Exists in an autoinhibited state in the absence of substrate protein, due to interactions of the leucine-rich repeats with NEL domain. Is activated upon binding to a substrate protein. Functionally, effector E3 ubiquitin ligase that interferes with host's ubiquitination pathway and modulates the acute inflammatory responses, thus facilitating bacterial colonization within the host cell. Interacts with IKBKG (NEMO) and TNIP1 (ABIN-1), a ubiquitin-binding adapter protein, which results in TNIP1-dependent 'Lys-27'-linked polyubiquitination of IKBKG. Consequently, polyubiquitinated IKBKG undergoes proteasome-dependent degradation, which perturbs NF-kappa-B activation during bacterial infection. Mediates polyubiquitination of host U2AF1, leading to its proteasomal degradation. Catalyzes 'Lys-48'-linked polyubiquitination and subsequent degradation of a subset of host guanylate-binding proteins (GBP1, GBP2, GBP4 and GBP6), thereby suppressing host cell defense. In contrast, host GBP3 and GBP7 are not ubiquitinated by IpaH9.8. Uses UBE2D2 (UBCH5B) as an E2 ubiquitin-conjugating enzyme. The sequence is that of E3 ubiquitin-protein ligase ipaH9.8 (ipaH9.8) from Shigella flexneri serotype X (strain 2002017).